The primary structure comprises 118 residues: Small ribosomal subunit protein uS13 (118 aa).

Residues 94–118 (NLPVRGQNTKNNARTRKGPIRSIKR) form a disordered region. The segment covering 106–118 (ARTRKGPIRSIKR) has biased composition (basic residues).

This sequence belongs to the universal ribosomal protein uS13 family. Part of the 30S ribosomal subunit. Forms a loose heterodimer with protein S19. Forms two bridges to the 50S subunit in the 70S ribosome.

Located at the top of the head of the 30S subunit, it contacts several helices of the 16S rRNA. In the 70S ribosome it contacts the 23S rRNA (bridge B1a) and protein L5 of the 50S subunit (bridge B1b), connecting the 2 subunits; these bridges are implicated in subunit movement. Contacts the tRNAs in the A and P-sites. The chain is Small ribosomal subunit protein uS13 from Psychrobacter sp. (strain PRwf-1).